Reading from the N-terminus, the 311-residue chain is Forkhead box protein I2 (311 aa).

Positions 99 to 193 form a DNA-binding region, fork-head; sequence RPPYSYSALI…DNGNFRRKRR (95 aa). Disordered stretches follow at residues 188–237 and 263–294; these read FRRK…TTTC and FSLRRPPPTAAAHSPQIPNTAPGFAPGHQTGA. A compositionally biased stretch (low complexity) spans 219–231; that stretch reads STPQDPQTSPSPS.

It is found in the nucleus. Possible transcriptional activator. The sequence is that of Forkhead box protein I2 from Mus musculus (Mouse).